The chain runs to 781 residues: Putative UPF0313 protein YPO0674/y3502/YP_2990 (781 aa).

Residues 368–646 form the Radical SAM core domain; that stretch reads AYDMIRFSIN…KALLRYHDPA (279 aa). [4Fe-4S] cluster contacts are provided by C382, C386, and C389. The segment at 681 to 781 is disordered; that stretch reads REARRALRHH…AGSRGKNRQH (101 aa). Residues 696–708 are compositionally biased toward polar residues; it reads KHTSITRQRQPSN. A compositionally biased stretch (low complexity) spans 726–750; the sequence is TSSAHSTSANQSTSANQSTSAAHST.

The protein belongs to the UPF0313 family. [4Fe-4S] cluster is required as a cofactor.

The chain is Putative UPF0313 protein YPO0674/y3502/YP_2990 from Yersinia pestis.